A 325-amino-acid chain; its full sequence is MAQMTMVQAITDALRIELKNDPNVLIFGEDVGVNGGVFRATEGLQAEFGEDRVFDTPLAESGIGGLAIGLALQGFRPVPEIQFFGFVYEVMDSICGQMARIRYRTGGRYHMPITIRSPFGGGVHTPELHSDSLEGLVAQQPGLKVVIPSTPYDAKGLLISAIRDNDPVIFLEHLKLYRSFRQEVPEGEYTIPIGKADIKREGKDITIIAYGAMVHESLKAAAELEKEGISAEVVDLRTVQPLDIETIIGSVEKTGRAIVVQEAQRQAGIAANVVAEINERAILSLEAPVLRVAAPDTVYPFAQAESVWLPNFKDVIETAKKVMNF.

Residue Glu-60 participates in thiamine diphosphate binding.

In terms of assembly, heterodimer of an alpha and a beta chain. The cofactor is thiamine diphosphate.

The catalysed reaction is N(6)-[(R)-lipoyl]-L-lysyl-[protein] + pyruvate + H(+) = N(6)-[(R)-S(8)-acetyldihydrolipoyl]-L-lysyl-[protein] + CO2. In terms of biological role, the pyruvate dehydrogenase complex catalyzes the overall conversion of pyruvate to acetyl-CoA and CO(2). It contains multiple copies of three enzymatic components: pyruvate dehydrogenase (E1), dihydrolipoamide acetyltransferase (E2) and lipoamide dehydrogenase (E3). In Geobacillus stearothermophilus (Bacillus stearothermophilus), this protein is Pyruvate dehydrogenase E1 component subunit beta (pdhB).